The sequence spans 328 residues: 4-hydroxy-3-methylbut-2-enyl diphosphate reductase (328 aa).

Cys-13 provides a ligand contact to [4Fe-4S] cluster. Residues His-41 and His-75 each contribute to the (2E)-4-hydroxy-3-methylbut-2-enyl diphosphate site. Dimethylallyl diphosphate contacts are provided by His-41 and His-75. The isopentenyl diphosphate site is built by His-41 and His-75. Cys-97 serves as a coordination point for [4Fe-4S] cluster. His-125 provides a ligand contact to (2E)-4-hydroxy-3-methylbut-2-enyl diphosphate. His-125 is a binding site for dimethylallyl diphosphate. Residue His-125 coordinates isopentenyl diphosphate. The active-site Proton donor is Glu-127. Thr-168 provides a ligand contact to (2E)-4-hydroxy-3-methylbut-2-enyl diphosphate. Residue Cys-225 participates in [4Fe-4S] cluster binding. 4 residues coordinate (2E)-4-hydroxy-3-methylbut-2-enyl diphosphate: Ser-253, Ser-254, Asn-255, and Ser-302. Positions 253, 254, 255, and 302 each coordinate dimethylallyl diphosphate. Residues Ser-253, Ser-254, Asn-255, and Ser-302 each contribute to the isopentenyl diphosphate site.

The protein belongs to the IspH family. Requires [4Fe-4S] cluster as cofactor.

It carries out the reaction isopentenyl diphosphate + 2 oxidized [2Fe-2S]-[ferredoxin] + H2O = (2E)-4-hydroxy-3-methylbut-2-enyl diphosphate + 2 reduced [2Fe-2S]-[ferredoxin] + 2 H(+). The catalysed reaction is dimethylallyl diphosphate + 2 oxidized [2Fe-2S]-[ferredoxin] + H2O = (2E)-4-hydroxy-3-methylbut-2-enyl diphosphate + 2 reduced [2Fe-2S]-[ferredoxin] + 2 H(+). Its pathway is isoprenoid biosynthesis; dimethylallyl diphosphate biosynthesis; dimethylallyl diphosphate from (2E)-4-hydroxy-3-methylbutenyl diphosphate: step 1/1. It participates in isoprenoid biosynthesis; isopentenyl diphosphate biosynthesis via DXP pathway; isopentenyl diphosphate from 1-deoxy-D-xylulose 5-phosphate: step 6/6. Its function is as follows. Catalyzes the conversion of 1-hydroxy-2-methyl-2-(E)-butenyl 4-diphosphate (HMBPP) into a mixture of isopentenyl diphosphate (IPP) and dimethylallyl diphosphate (DMAPP). Acts in the terminal step of the DOXP/MEP pathway for isoprenoid precursor biosynthesis. The protein is 4-hydroxy-3-methylbut-2-enyl diphosphate reductase of Chlorobium chlorochromatii (strain CaD3).